A 288-amino-acid polypeptide reads, in one-letter code: Elongation factor Ts (288 aa).

Residues 80–83 (TDFV) are involved in Mg(2+) ion dislocation from EF-Tu.

Belongs to the EF-Ts family.

It localises to the cytoplasm. Associates with the EF-Tu.GDP complex and induces the exchange of GDP to GTP. It remains bound to the aminoacyl-tRNA.EF-Tu.GTP complex up to the GTP hydrolysis stage on the ribosome. This chain is Elongation factor Ts, found in Chromobacterium violaceum (strain ATCC 12472 / DSM 30191 / JCM 1249 / CCUG 213 / NBRC 12614 / NCIMB 9131 / NCTC 9757 / MK).